Reading from the N-terminus, the 481-residue chain is Long chain base biosynthesis protein 1b (481 aa).

A helical transmembrane segment spans residues 32–52 (FGIHIDGHLVVEGLLIAAILF).

Belongs to the class-II pyridoxal-phosphate-dependent aminotransferase family. In terms of assembly, heterodimer with LCB2. Component of the serine palmitoyltransferase (SPT) complex, composed of LCB1 and LCB2. Pyridoxal 5'-phosphate is required as a cofactor.

Its subcellular location is the endoplasmic reticulum membrane. It carries out the reaction L-serine + hexadecanoyl-CoA + H(+) = 3-oxosphinganine + CO2 + CoA. It participates in lipid metabolism; sphingolipid metabolism. In terms of biological role, serine palmitoyltransferase (SPT). The heterodimer formed with LCB2 constitutes the catalytic core. The chain is Long chain base biosynthesis protein 1b from Oryza sativa subsp. japonica (Rice).